The chain runs to 215 residues: Adenylate kinase (215 aa).

Position 10 to 15 (10 to 15 (GAGKGT)) interacts with ATP. Residues 30–59 (STGDMLRAAIKAGTPLGLEAKKIIDEGGLV) are NMP. Residues T31, R36, 57–59 (GLV), 85–88 (GFPR), and Q92 contribute to the AMP site. The LID stretch occupies residues 122 to 159 (GRRVHLASGRTYHVTYNPPKTEGKDDVTGEDLIQRDDD). Residues R123 and 132-133 (TY) each bind ATP. The AMP site is built by R156 and R167. Residue Q200 coordinates ATP.

This sequence belongs to the adenylate kinase family. In terms of assembly, monomer.

It localises to the cytoplasm. It catalyses the reaction AMP + ATP = 2 ADP. The protein operates within purine metabolism; AMP biosynthesis via salvage pathway; AMP from ADP: step 1/1. Its function is as follows. Catalyzes the reversible transfer of the terminal phosphate group between ATP and AMP. Plays an important role in cellular energy homeostasis and in adenine nucleotide metabolism. In Neisseria gonorrhoeae (strain ATCC 700825 / FA 1090), this protein is Adenylate kinase.